We begin with the raw amino-acid sequence, 632 residues long: Sodium- and chloride-dependent GABA transporter 3 (632 aa).

Residues 1 to 41 (MTAEKALPLGNGKAAEEARESEAPGGGCSSGGAAPARHPRV) form a disordered region. At 1–58 (MTAEKALPLGNGKAAEEARESEAPGGGCSSGGAAPARHPRVKRDKAVHERGHWNNKVE) the chain is on the cytoplasmic side. S21 is subject to Phosphoserine. 3 helical membrane-spanning segments follow: residues 59-79 (FVLS…FPYL), 87-106 (AFLI…VFFL), and 131-151 (GIGY…IIIL). Over 152 to 225 (AWAIFYLSNC…DGIEHIGNLR (74 aa)) the chain is Extracellular. N-linked (GlcNAc...) asparagine glycans are attached at residues N187, N190, and N198. The next 9 membrane-spanning stretches (helical) occupy residues 226–244 (WELA…FCIW), 253–270 (VVYV…ILLI), 306–323 (IFFS…LGSY), 335–356 (IMLC…FSVL), 389–408 (MPLS…FLGL), 438–456 (LLIL…VMLT), 473–493 (GMCL…VYGS), 514–533 (WCWM…FFLI), and 553–571 (IGWL…WICI). Over 572 to 632 (TVWKTEGTLP…AAITEKETHF (61 aa)) the chain is Cytoplasmic.

This sequence belongs to the sodium:neurotransmitter symporter (SNF) (TC 2.A.22) family. SLC6A11 subfamily. Widespread distribution in the brain.

The protein localises to the cell membrane. The catalysed reaction is 4-aminobutanoate(out) + chloride(out) + 2 Na(+)(out) = 4-aminobutanoate(in) + chloride(in) + 2 Na(+)(in). The enzyme catalyses taurine(out) + chloride(out) + 2 Na(+)(out) = taurine(in) + chloride(in) + 2 Na(+)(in). It carries out the reaction beta-alanine(out) + chloride(out) + 2 Na(+)(out) = beta-alanine(in) + chloride(in) + 2 Na(+)(in). It catalyses the reaction hypotaurine(out) + chloride(out) + 2 Na(+)(out) = hypotaurine(in) + chloride(in) + 2 Na(+)(in). GABA transport is inhibited by SNAP-5114. Mediates sodium- and chloride-dependent transport of gamma-aminobutyric acid (GABA). Can also mediate transport of beta-alanine and to a lower extent that of taurine and hypotaurine. This chain is Sodium- and chloride-dependent GABA transporter 3 (SLC6A11), found in Homo sapiens (Human).